Reading from the N-terminus, the 883-residue chain is Alanine--tRNA ligase (883 aa).

H564, H568, C666, and H670 together coordinate Zn(2+).

The protein belongs to the class-II aminoacyl-tRNA synthetase family. Zn(2+) serves as cofactor.

It localises to the cytoplasm. It catalyses the reaction tRNA(Ala) + L-alanine + ATP = L-alanyl-tRNA(Ala) + AMP + diphosphate. Functionally, catalyzes the attachment of alanine to tRNA(Ala) in a two-step reaction: alanine is first activated by ATP to form Ala-AMP and then transferred to the acceptor end of tRNA(Ala). Also edits incorrectly charged Ser-tRNA(Ala) and Gly-tRNA(Ala) via its editing domain. The chain is Alanine--tRNA ligase from Synechococcus sp. (strain JA-3-3Ab) (Cyanobacteria bacterium Yellowstone A-Prime).